A 137-amino-acid polypeptide reads, in one-letter code: Basic phospholipase A2 homolog Bsc-K49 (137 aa).

Positions Met1–Gly16 are cleaved as a signal peptide. Disulfide bonds link Cys42–Cys131, Cys44–Cys60, Cys59–Cys111, Cys65–Cys137, Cys66–Cys104, Cys73–Cys97, and Cys91–Cys102. Positions Lys121–Lys133 are important for membrane-damaging activities in eukaryotes and bacteria; heparin-binding.

Belongs to the phospholipase A2 family. Group II subfamily. K49 sub-subfamily. As to quaternary structure, homodimer; non-covalently linked. As to expression, expressed by the venom gland.

It localises to the secreted. Its function is as follows. Snake venom phospholipase A2 that lacks enzymatic activity. Is myotoxic, and displays edema-inducing activities. A model of myotoxic mechanism has been proposed: an apo Lys49-PLA2 is activated by the entrance of a hydrophobic molecule (e.g. fatty acid) at the hydrophobic channel of the protein leading to a reorientation of a monomer. This reorientation causes a transition between 'inactive' to 'active' states, causing alignment of C-terminal and membrane-docking sites (MDoS) side-by-side and putting the membrane-disruption sites (MDiS) in the same plane, exposed to solvent and in a symmetric position for both monomers. The MDoS region stabilizes the toxin on membrane by the interaction of charged residues with phospholipid head groups. Subsequently, the MDiS region destabilizes the membrane with penetration of hydrophobic residues. This insertion causes a disorganization of the membrane, allowing an uncontrolled influx of ions (i.e. calcium and sodium), and eventually triggering irreversible intracellular alterations and cell death. This Bothriechis schlegelii (Eyelash palm pitviper) protein is Basic phospholipase A2 homolog Bsc-K49.